Reading from the N-terminus, the 73-residue chain is DNA-directed RNA polymerase subunit omega (73 aa).

This sequence belongs to the RNA polymerase subunit omega family. As to quaternary structure, the RNAP catalytic core consists of 2 alpha, 1 beta, 1 beta' and 1 omega subunit. When a sigma factor is associated with the core the holoenzyme is formed, which can initiate transcription.

The enzyme catalyses RNA(n) + a ribonucleoside 5'-triphosphate = RNA(n+1) + diphosphate. Promotes RNA polymerase assembly. Latches the N- and C-terminal regions of the beta' subunit thereby facilitating its interaction with the beta and alpha subunits. The chain is DNA-directed RNA polymerase subunit omega from Clostridium novyi (strain NT).